A 274-amino-acid polypeptide reads, in one-letter code: NH(3)-dependent NAD(+) synthetase (274 aa).

46 to 53 serves as a coordination point for ATP; sequence GISGGQDS. Aspartate 52 provides a ligand contact to Mg(2+). Arginine 140 serves as a coordination point for deamido-NAD(+). Threonine 160 provides a ligand contact to ATP. Mg(2+) is bound at residue glutamate 165. Deamido-NAD(+) is bound by residues lysine 173 and aspartate 180. ATP contacts are provided by lysine 189 and threonine 211. Residue 260–261 coordinates deamido-NAD(+); sequence HK.

This sequence belongs to the NAD synthetase family. In terms of assembly, homodimer.

The catalysed reaction is deamido-NAD(+) + NH4(+) + ATP = AMP + diphosphate + NAD(+) + H(+). It functions in the pathway cofactor biosynthesis; NAD(+) biosynthesis; NAD(+) from deamido-NAD(+) (ammonia route): step 1/1. In terms of biological role, catalyzes the ATP-dependent amidation of deamido-NAD to form NAD. Uses ammonia as a nitrogen source. The sequence is that of NH(3)-dependent NAD(+) synthetase from Lactococcus lactis subsp. cremoris (strain MG1363).